Consider the following 200-residue polypeptide: Large ribosomal subunit protein uL4 (200 aa).

The tract at residues serine 42 to alanine 69 is disordered.

It belongs to the universal ribosomal protein uL4 family. As to quaternary structure, part of the 50S ribosomal subunit.

Functionally, one of the primary rRNA binding proteins, this protein initially binds near the 5'-end of the 23S rRNA. It is important during the early stages of 50S assembly. It makes multiple contacts with different domains of the 23S rRNA in the assembled 50S subunit and ribosome. Forms part of the polypeptide exit tunnel. The sequence is that of Large ribosomal subunit protein uL4 from Alcanivorax borkumensis (strain ATCC 700651 / DSM 11573 / NCIMB 13689 / SK2).